We begin with the raw amino-acid sequence, 4074 residues long: Fibrocystin (4074 aa).

Positions 1 to 22 (MIVWLISLMSIEILLLAGPALS) are cleaved as a signal peptide. Asparagine 54 and asparagine 224 each carry an N-linked (GlcNAc...) asparagine glycan. The IPT/TIG 1 domain maps to 258 to 310 (EILSVFPETGSLGGKTDIIITGDFFDNPALVTIAGVPCDIRHMSPRKIECTTR). The PA14 domain maps to 323-483 (AGNRGLLFEV…TWLNPDVVST (161 aa)). 46 N-linked (GlcNAc...) asparagine glycosylation sites follow: asparagine 355, asparagine 385, asparagine 518, asparagine 527, asparagine 640, asparagine 710, asparagine 741, asparagine 822, asparagine 829, asparagine 868, asparagine 953, asparagine 966, asparagine 976, asparagine 1006, asparagine 1059, asparagine 1083, asparagine 1115, asparagine 1134, asparagine 1233, asparagine 1240, asparagine 1274, asparagine 1284, asparagine 1308, asparagine 1319, asparagine 1342, asparagine 1373, asparagine 1445, asparagine 1456, asparagine 1471, asparagine 1490, asparagine 1528, asparagine 1560, asparagine 1578, asparagine 1598, asparagine 1627, asparagine 1694, asparagine 1760, asparagine 1775, asparagine 1789, asparagine 1875, asparagine 1915, asparagine 1941, asparagine 1955, asparagine 2030, asparagine 2111, and asparagine 2140. Residues 944–1000 (SLLIYIFGINFSGDPQALEIMVNKTNCKVIFSNQTNVICQTDLLPVGMHRLFMVVRP) enclose the IPT/TIG 2 domain. IPT/TIG domains follow at residues 1018 to 1101 (PRLD…AFTY), 1107 to 1186 (PVIT…RSPG), and 1199 to 1274 (SIEP…WAGN). An IPT/TIG 6 domain is found at 1385 to 1464 (PWIMAISPTH…LNVTVIVNGL (80 aa)). An IPT/TIG 7 domain is found at 1573–1641 (HYFPKNFSIH…LVIEVDGLSY (69 aa)). The 122-residue stretch at 1928 to 2049 (HSWFPERVPQ…PEVTFTHLQA (122 aa)) folds into the G8 1 domain. PbH1 repeat units follow at residues 2245 to 2267 (TLGLKVDSNIFYNILGHALLVGT), 2288 to 2322 (EQGNIIRNNVIISISGTEGLSSPEMLTPSGIYILN), 2351 to 2373 (APLLSFTQNIAHSCTRYGLFIYP), 2383 to 2404 (RGPTLFQNFTVWGSAGGARISR), and 2405 to 2427 (SSNLHLKNFQVYSCRDFGIDILE). Residue asparagine 2390 is glycosylated (N-linked (GlcNAc...) asparagine). Asparagine 2431, asparagine 2467, asparagine 2531, asparagine 2549, asparagine 2579, asparagine 2591, asparagine 2749, asparagine 2764, asparagine 2972, and asparagine 3004 each carry an N-linked (GlcNAc...) asparagine glycan. One copy of the PbH1 6 repeat lies at 2460-2483 (RWELIISNTTFVNFDLTDCVSIRT). In terms of domain architecture, G8 2 spans 2743-2869 (EGWGGHNHTI…PKKSWTRLAA (127 aa)). The PbH1 7 repeat unit spans residues 3029–3051 (SHGIILNDNIVFGTVGHGIDLEG). Asparagine 3053 carries an N-linked (GlcNAc...) asparagine glycan. A PbH1 8 repeat occupies 3082–3104 (AKDINLYGNVVAGSERIGFHIQG). Asparagine 3136, asparagine 3165, asparagine 3221, asparagine 3484, asparagine 3702, asparagine 3721, and asparagine 3833 each carry an N-linked (GlcNAc...) asparagine glycan. The PbH1 9 repeat unit spans residues 3158–3183 (ENSVEIENITLVDNSIGLLATVYVSS). A helical transmembrane segment spans residues 3854 to 3874 (IILAVSLCSVASWLALCCLVC). Residues 3871–3888 (CLVCCWFRKSKSRKIKSE) are ciliary targeting sequence (CST). Disordered regions lie at residues 3896–3919 (NDQKSHIHMSSKHPRSQETKKEDT), 3943–3965 (NGVSRRKVSRRAVREEGSSREED), and 4031–4074 (LQGQ…QEQL). Composition is skewed to basic and acidic residues over residues 3910–3919 (RSQETKKEDT) and 3954–3965 (AVREEGSSREED). The interval 3947-3976 (RRKVSRRAVREEGSSREEDVVPAPRIISIT) is nuclear localization signal (NLS).

Interacts with CAMLG. Interacts with PKD2. Interacts (via CST) with ARF4; this interaction allows an efficient PKHD1 trafficking to the cilium. Interacts (via CST) with RAB8A; this interaction controls trafficking through the endomembrane systeme and to the cilium. Interacts (via CST) with TULP3; this interaction allows PKHD1 trafficking to the cilium. In terms of processing, palmitoylated. Palmitoylation facilitates the trafficking to the cilia and membrane targeting. N-glycosylated. Post-translationally, several proteolytic cleavages occur within the extracellular domain, whereas at least one cleavage occurs within the cytoplasmic domain. Cleaved by a probable proprotein convertase which produces an extracellular domain (polyductin extracellular domain, (PECD)) and a C-terminal fragment (polyductin transmembrane fragment (PTM)) which are tethered together by disulfide bonds. This extracellular domain (PECD) is then shed from the primary cilium by activation of a member of the ADAM metalloproteinase disintegrins family, resulting in concomitant release of an intra-cellular C-terminal fragment (ICD) via a gamma-secretase-dependent process. The proteolytic cleavage of the C-terminal intracellular fragment (ICD) is controlled by cytosolic calcium concentration and activation of PKC.

It is found in the cell membrane. It localises to the cytoplasm. Its subcellular location is the apical cell membrane. The protein localises to the cytoskeleton. The protein resides in the cilium basal body. It is found in the cell projection. It localises to the cilium. Its subcellular location is the spindle. The protein localises to the chromosome. The protein resides in the centromere. It is found in the nucleus. It localises to the secreted. Its subcellular location is the extracellular exosome. The protein localises to the endoplasmic reticulum. The protein resides in the golgi apparatus. In terms of biological role, promotes ciliogenesis in renal epithelial cells and therefore participates in the tubules formation and/ or ensures the maintenance of the architecture of the lumen of the kidney. Has an impact on cellular symmetry by ensuring correct bipolar cell division through the regulation of centrosome duplication and mitotic spindle assembly and by maintaining oriented cell division (OCD) during tubular elongation through planar cell polarity (PCP) pathway. During epithelial cell morphogenesis, it also regulates cell-cell and cell-matrix adhesion and participates in cell motility. Promotes cell-cell contact through the positive regulation of PTK2 kinase activity leading to either positive regulation of epithelial cell proliferation through the HRAS/RAF1 pathways, or negative regulation of apoptosis through the PDK1/AKT1 pathway. May act in collecting-duct and biliary differentiation. May participate in the regulation of the cholangiocytes proliferation and the CCN2 production in an CXCL8-dependent manner. This Canis lupus familiaris (Dog) protein is Fibrocystin.